Reading from the N-terminus, the 54-residue chain is uncharacterized protein (54 aa).

2 stretches are compositionally biased toward basic and acidic residues: residues 1-19 and 26-54; these read MTEK…HNDL and EELK…YDTK. The segment at 1–54 is disordered; the sequence is MTEKKQQNKPNENPEHNDLTDPIPNEELKENMNDEKHKRQQRDNSQSERDYDTK.

This is an uncharacterized protein from Bacillus subtilis (strain 168).